The chain runs to 519 residues: Cytochrome P450 72C1 (519 aa).

A helical membrane pass occupies residues 10–30 (VFLIGFLILILNWVWRAVNWV). Cys467 lines the heme pocket.

Belongs to the cytochrome P450 family. Heme serves as cofactor. As to expression, expressed in hypocotyls, roots, cotyledons, stamens and silique junctions.

Its subcellular location is the membrane. Its function is as follows. Atypical cytochrome P450 involved in brassinosteroids (BRs) inactivation and regulation of BRs homeostasis. Does not possess carbon 26 hydroxylase activity and may inactivate BRs by hydroxylation of carbons other than C-26. Acts in association with CYP734A1 to inactivate BRs and modulate photomorphogenesis. The chain is Cytochrome P450 72C1 (CYP72C1) from Arabidopsis thaliana (Mouse-ear cress).